The following is a 719-amino-acid chain: Photosystem I P700 chlorophyll a apoprotein A1 (719 aa).

8 helical membrane passes run 59–82, 145–168, 184–208, 280–298, 335–358, 374–400, 422–444, and 520–538; these read IFGA…FHGA, LYCT…FHYH, LNHH…HVSL, TAHH…GHMY, WHAQ…HHMY, LSLF…IFMV, AIIS…LYIH, and FLVH…LILL. Cys-562 and Cys-571 together coordinate [4Fe-4S] cluster. 2 helical membrane-spanning segments follow: residues 578–599 and 653–675; these read HVFL…HFSW and LSAY…MFLF. His-664 is a binding site for chlorophyll a'. Chlorophyll a-binding residues include Met-672 and Tyr-680. Trp-681 serves as a coordination point for phylloquinone. A helical transmembrane segment spans residues 713–719; that stretch reads AVGVTHT.

The protein belongs to the PsaA/PsaB family. The PsaA/B heterodimer binds the P700 chlorophyll special pair and subsequent electron acceptors. PSI consists of a core antenna complex that captures photons, and an electron transfer chain that converts photonic excitation into a charge separation. The eukaryotic PSI reaction center is composed of at least 11 subunits. Requires P700 is a chlorophyll a/chlorophyll a' dimer, A0 is one or more chlorophyll a, A1 is one or both phylloquinones and FX is a shared 4Fe-4S iron-sulfur center. as cofactor.

It localises to the plastid. It is found in the chloroplast thylakoid membrane. The catalysed reaction is reduced [plastocyanin] + hnu + oxidized [2Fe-2S]-[ferredoxin] = oxidized [plastocyanin] + reduced [2Fe-2S]-[ferredoxin]. PsaA and PsaB bind P700, the primary electron donor of photosystem I (PSI), as well as the electron acceptors A0, A1 and FX. PSI is a plastocyanin-ferredoxin oxidoreductase, converting photonic excitation into a charge separation, which transfers an electron from the donor P700 chlorophyll pair to the spectroscopically characterized acceptors A0, A1, FX, FA and FB in turn. Oxidized P700 is reduced on the lumenal side of the thylakoid membrane by plastocyanin. The sequence is that of Photosystem I P700 chlorophyll a apoprotein A1 from Asplenium nidus (Bird's nest fern).